A 169-amino-acid chain; its full sequence is Peptide deformylase (169 aa).

Positions 91 and 133 each coordinate Fe cation. Glutamate 134 is an active-site residue. Histidine 137 provides a ligand contact to Fe cation.

It belongs to the polypeptide deformylase family. It depends on Fe(2+) as a cofactor.

It carries out the reaction N-terminal N-formyl-L-methionyl-[peptide] + H2O = N-terminal L-methionyl-[peptide] + formate. Its function is as follows. Removes the formyl group from the N-terminal Met of newly synthesized proteins. Requires at least a dipeptide for an efficient rate of reaction. N-terminal L-methionine is a prerequisite for activity but the enzyme has broad specificity at other positions. This Klebsiella pneumoniae subsp. pneumoniae (strain ATCC 700721 / MGH 78578) protein is Peptide deformylase.